The following is a 1722-amino-acid chain: Signal-induced proliferation-associated 1-like protein 2 (1722 aa).

2 disordered regions span residues 1 to 29 and 44 to 72; these read MSDP…RTMQ and SMGP…TPAV. The segment covering 57–66 has biased composition (gly residues); it reads EGGGGGGGPA. A phosphoserine mark is found at Ser149, Ser380, and Ser384. A disordered region spans residues 362–405; sequence ASAASQTPVPVGPAGGCESPLGSKEDLNSKENPDADEGDGKSND. Positions 384 to 403 are enriched in basic and acidic residues; sequence SKEDLNSKENPDADEGDGKS. Positions 596-813 constitute a Rap-GAP domain; the sequence is LLKLDEQGLS…RTRQEYLKDL (218 aa). The region spanning 951–1027 is the PDZ domain; sequence EMTLRRNGLG…VKVVIIQPHE (77 aa). Ser1030 carries the post-translational modification Phosphoserine. Disordered stretches follow at residues 1068–1246 and 1331–1360; these read HRVP…FGSG and GSMG…SKST. Composition is skewed to low complexity over residues 1091–1103 and 1120–1131; these read LQCQ…AQAA and SSPSNQSSSSDP. The span at 1195–1218 shows a compositional bias: basic and acidic residues; that stretch reads YKERVLQKDGSCKESPNKLSHIGD. Residues 1220 to 1237 are compositionally biased toward low complexity; sequence SCSSHSSSNTLSSNTSSN. The residue at position 1245 (Ser1245) is a Phosphoserine. Low complexity predominate over residues 1331-1355; sequence GSMGDLSEVSSHSSGSQHSGSPSAH. A phosphoserine mark is found at Ser1461, Ser1472, Ser1478, Ser1488, Ser1549, Ser1552, and Ser1591. A coiled-coil region spans residues 1652 to 1712; the sequence is STLTGKVNQL…ATAQLRKFTE (61 aa).

The protein is Signal-induced proliferation-associated 1-like protein 2 (Sipa1l2) of Mus musculus (Mouse).